Consider the following 1226-residue polypeptide: Arf guanine nucleotide exchange factor SYT1 (1226 aa).

Disordered regions lie at residues 17 to 39 (HSNDKNGNKKGGSNVSTGIDKLR) and 113 to 158 (RNGQ…RNSK). Over residues 131 to 142 (SIEKVPKPDGER) the composition is skewed to basic and acidic residues. T277 carries the post-translational modification Phosphothreonine. Disordered regions lie at residues 311 to 405 (NSLM…TGMS), 954 to 1022 (STGS…NEDY), and 1178 to 1198 (LEHGKGEEEGQGNNDDSDGID). Residues 349 to 360 (LSRSRSQSTSFV) show a composition bias toward polar residues. A Phosphoserine modification is found at S369. A compositionally biased stretch (polar residues) spans 386-405 (GPTSVYNNKSNANSTITGMS). One can recognise an SEC7 domain in the interval 405-620 (SRRSSSIVNA…TYFYENVTAK (216 aa)). Residues 844–1074 (ILQMGAIMNL…DSINLFSAYD (231 aa)) form the PH domain. Low complexity-rich tracts occupy residues 956–969 (GSHTSNTTAASSSA) and 994–1017 (SSVSNGESDNDSVSSSDNQLSSND).

The protein resides in the cytoplasm. Inhibited by brefeldin A. In terms of biological role, guanine nucleotide exchange factor for Arf GTPases, stimulating the nucleotide exchange from the GDP-bound to the GTP-bound form. Catalyzes both the GDP release by and the GTP binding to ARF2. Has no exchange activity on Rab GTPases. Involved in vesicular transport. This Saccharomyces cerevisiae (strain ATCC 204508 / S288c) (Baker's yeast) protein is Arf guanine nucleotide exchange factor SYT1 (SYT1).